The chain runs to 413 residues: Phosphopentomutase (413 aa).

Asp-11, Asp-306, His-311, Asp-347, His-348, and His-359 together coordinate Mn(2+).

It belongs to the phosphopentomutase family. Mn(2+) is required as a cofactor.

Its subcellular location is the cytoplasm. It carries out the reaction 2-deoxy-alpha-D-ribose 1-phosphate = 2-deoxy-D-ribose 5-phosphate. The catalysed reaction is alpha-D-ribose 1-phosphate = D-ribose 5-phosphate. It functions in the pathway carbohydrate degradation; 2-deoxy-D-ribose 1-phosphate degradation; D-glyceraldehyde 3-phosphate and acetaldehyde from 2-deoxy-alpha-D-ribose 1-phosphate: step 1/2. In terms of biological role, isomerase that catalyzes the conversion of deoxy-ribose 1-phosphate (dRib-1-P) and ribose 1-phosphate (Rib-1-P) to deoxy-ribose 5-phosphate (dRib-5-P) and ribose 5-phosphate (Rib-5-P), respectively. This is Phosphopentomutase from Helicobacter acinonychis (strain Sheeba).